Consider the following 184-residue polypeptide: GTP cyclohydrolase 1 (184 aa).

Cys75, His78, and Cys146 together coordinate Zn(2+).

The protein belongs to the GTP cyclohydrolase I family. Homomer.

The catalysed reaction is GTP + H2O = 7,8-dihydroneopterin 3'-triphosphate + formate + H(+). It participates in cofactor biosynthesis; 7,8-dihydroneopterin triphosphate biosynthesis; 7,8-dihydroneopterin triphosphate from GTP: step 1/1. The sequence is that of GTP cyclohydrolase 1 from Streptococcus pneumoniae (strain Hungary19A-6).